The following is a 311-amino-acid chain: Probable manganese-dependent inorganic pyrophosphatase (311 aa).

The Mn(2+) site is built by His9, Asp13, Asp15, Asp75, His97, and Asp149.

The protein belongs to the PPase class C family. The cofactor is Mn(2+).

It is found in the cytoplasm. The enzyme catalyses diphosphate + H2O = 2 phosphate + H(+). This chain is Probable manganese-dependent inorganic pyrophosphatase, found in Lactobacillus delbrueckii subsp. bulgaricus (strain ATCC BAA-365 / Lb-18).